Reading from the N-terminus, the 50-residue chain is Cytochrome c oxidase subunit 4 (50 aa).

The Cytoplasmic portion of the chain corresponds to 2–17 (ASHHEITDHKHGEMDI). The chain crosses the membrane as a helical span at residues 18-49 (RHQQATFAGFIKGATWVSILSIAVLVFLALAN). Position 50 (serine 50) is a topological domain, periplasmic.

The protein resides in the cell inner membrane. It carries out the reaction 4 Fe(II)-[cytochrome c] + O2 + 8 H(+)(in) = 4 Fe(III)-[cytochrome c] + 2 H2O + 4 H(+)(out). In terms of biological role, not required for enzymatic activity or proton pumping of the cytochrome c oxidase complex. This chain is Cytochrome c oxidase subunit 4 (ctaH), found in Paracoccus denitrificans.